Reading from the N-terminus, the 344-residue chain is Lysophosphatidic acid receptor 6 (344 aa).

Residues 1–25 (MVSSNGSQCPYDDSFKYTLYGCMFS) are Extracellular-facing. N5 is a glycosylation site (N-linked (GlcNAc...) asparagine). Residues 26–46 (MVFVLGLISNCVAIYIFICAL) traverse the membrane as a helical segment. The Cytoplasmic portion of the chain corresponds to 47–56 (KVRNETTTYM). Residues 57-77 (INLAMSDLLFVFTLPFRIFYF) form a helical membrane-spanning segment. Over 78–90 (ATRNWPFGDLLCK) the chain is Extracellular. A disulfide bridge connects residues C89 and C168. A helical membrane pass occupies residues 91 to 111 (ISVMLFYTNMYGSILFLTCIS). Residues 112–134 (VDRFLAIVYPFKSKTLRTKRNAK) lie on the Cytoplasmic side of the membrane. The helical transmembrane segment at 135–155 (IVCIAVWFTVMGGSAPAVFFQ) threads the bilayer. Residues 156 to 183 (STHSQGNNTSEACFENFPAATWKTYLSR) are Extracellular-facing. N-linked (GlcNAc...) asparagine glycans are attached at residues N162 and N163. A helical transmembrane segment spans residues 184 to 204 (IVIFIEIVGFFIPLILNVTCS). Topologically, residues 205-230 (SMVLRTLNKPVTLSRSKMNKTKVLKM) are cytoplasmic. Residues 231 to 251 (IFVHLVIFCFCFVPYNINLIL) traverse the membrane as a helical segment. Residues 252 to 272 (YSLMRTQTFVNCSVVAAVRTM) lie on the Extracellular side of the membrane. An N-linked (GlcNAc...) asparagine glycan is attached at N262. Residues 273 to 293 (YPITLCIAVSNCCFDPIVYYF) traverse the membrane as a helical segment. A lipid anchor (S-palmitoyl cysteine) is attached at C284. Topologically, residues 294–344 (TSDTIQNSIKMKNWSVRRSDSRFSEVQGTENFIQHNLQTLKNKIFDNESAI) are cytoplasmic.

This sequence belongs to the G-protein coupled receptor 1 family. Ubiquitously expressed. Detected in the hair follicles and skin (at protein level).

Its subcellular location is the cell membrane. Binds to oleoyl-L-alpha-lysophosphatidic acid (LPA). Intracellular cAMP is involved in the receptor activation. Important for the maintenance of hair growth and texture. This Mus musculus (Mouse) protein is Lysophosphatidic acid receptor 6 (Lpar6).